A 140-amino-acid polypeptide reads, in one-letter code: Oocyte-expressed protein homolog (140 aa).

The KH; atypical domain occupies 40–101 (PLVFFLEAWL…AVQRQVKSVL (62 aa)).

The protein belongs to the KHDC1 family. Component of the subcortical maternal complex (SCMC), at least composed of NLRP5, KHDC3, OOEP, and TLE6. Within the complex, interacts with NLRP5, KHDC3 and TLE6. As part of the SCMC interacts with the SCMC-associated protein NLRP4F. The SCMC may facilitate translocation of its components between the nuclear and cytoplasmic compartments. Forms a scaffold complex with KHDC3/FILIA, and interacts with BLM and TRIM25 at DNA replication forks.

Its subcellular location is the cytoplasm. The protein resides in the nucleus. Its function is as follows. Component of the subcortical maternal complex (SCMC), a multiprotein complex that plays a key role in early embryonic development. The SCMC complex is a structural constituent of cytoplasmic lattices, which consist in fibrous structures found in the cytoplasm of oocytes and preimplantation embryos. They are required to store maternal proteins critical for embryonic development, such as proteins that control epigenetic reprogramming of the preimplantation embryo, and prevent their degradation or activation. As part of the OOEP-KHDC3 scaffold, recruits BLM and TRIM25 to DNA replication forks, thereby promoting the ubiquitination of BLM by TRIM25, enhancing BLM retainment at replication forks and therefore promoting stalled replication fork restart. Positively regulates the homologous recombination-mediated DNA double-strand break (DSB) repair pathway by regulating ATM activation and RAD51 recruitment to DSBs in oocytes. Thereby contributes to oocyte survival and the resumption and completion of meiosis. In Bos taurus (Bovine), this protein is Oocyte-expressed protein homolog (OOEP).